We begin with the raw amino-acid sequence, 142 residues long: MESMGNNSPGPEIRALARNIRMSAHKARRVINQIRGRSYGQALMILELMPYGACYPISQLIHSAAANANHNMGLNKANLLVGRVEVNEGAVLKRIQPRAQGRGYPIQKPTCHITIVSEEISRSNDPIMSIESRKKGYVWRRK.

Belongs to the universal ribosomal protein uL22 family. Part of the 50S ribosomal subunit.

The protein resides in the plastid. It is found in the chloroplast. This protein binds specifically to 23S rRNA. In terms of biological role, the globular domain of the protein is located near the polypeptide exit tunnel on the outside of the subunit, while an extended beta-hairpin is found that lines the wall of the exit tunnel in the center of the 70S ribosome. The chain is Large ribosomal subunit protein uL22c (rpl22) from Pinus koraiensis (Korean pine).